Here is a 387-residue protein sequence, read N- to C-terminus: Early growth response protein 3 (387 aa).

Positions 241–283 (PGFGSLPQPPLTLKPIRPRKYPNRPSKTPLHERPHACPAEGCD) are disordered. Positions 269–283 (PLHERPHACPAEGCD) are enriched in basic and acidic residues. 3 C2H2-type zinc fingers span residues 275–299 (HACPAEGCDRRFSRSDELTRHLRIH), 305–327 (FQCRICMRSFSRSDHLTTHIRTH), and 333–355 (FACEFCGRKFARSDERKRHAKIH). Residues 348 to 387 (RKRHAKIHLKQKEKKAEKGGAPSASSAPPVSLAPVVTTCA) form a disordered region. Over residues 350–360 (RHAKIHLKQKE) the composition is skewed to basic residues. The span at 368–387 (APSASSAPPVSLAPVVTTCA) shows a compositional bias: low complexity.

This sequence belongs to the EGR C2H2-type zinc-finger protein family.

Its subcellular location is the nucleus. Functionally, probable transcription factor involved in muscle spindle development. The chain is Early growth response protein 3 (EGR3) from Homo sapiens (Human).